We begin with the raw amino-acid sequence, 556 residues long: MSSASSDSNTGSLTIAGSGIASVRHMTLETLAHVQEADIVFYVVADPVTEAYIKKNARGPCKDLEVLFDKDKVRYDTYVQMAETMLNAVREGQKVLGIFYGHPGVFVSPSRRALSIARKEGYQAKMLPGISSEDYMFADLEFDPAVHGCCAYEATQLLLREVSLDTAMSNIIWQVGGVGVSKIDFENSKVKLLVDRLEKDFGPDHHVVHYIGAVLPQSATVQDVLKISDLRKEEIVAQFNSCSTLYVPPLTHANKFSGNMVKQLFGQDVTEVSSALCPTPKWAAGSHLGDVVEYGPREKAAVDALVEHTVPADYRVLGGSLAFQQFMIDLALRPAIQANYKENPRALVDATKGLTTVEQAALLLRQPGAVFGVMKLRASEVANEQGHPVAPASLDHVAFTAPSPASLDHVAFSAPNPASLDHVAFIAPTPASLDHVAFSAPTPASLDHVSFGTPTSASLDHVAFEAPVPASLDHVAFAAPVPASLDHVAFAAPTPASLDHVAFAAPTPASLDHVAFAVPVPASLDHIAFSVPTPASLDHVAFAVPVPDHVAGIPCM.

Residues 1 to 250 (MSSASSDSNT…SCSTLYVPPL (250 aa)) are methyltransferase domain. Residues Arg74, Tyr78, and Tyr100 contribute to the active site. S-adenosyl-L-methionine-binding residues include Tyr100, His102, Val105, Gln174, Gly212, Ser243, and Thr244. The interval 251 to 377 (THANKFSGNM…GAVFGVMKLR (127 aa)) is clasp domain. The segment at 378-386 (ASEVANEQG) is precursor leader. Asp421, Asp434, Asp447, Asp460, Asp473, Asp486, Asp499, Asp512, Asp525, and Asp538 each carry N-methylaspartate. Residues 543–556 (AVPVPDHVAGIPCM) constitute a propeptide that is removed on maturation.

The protein in the N-terminal section; belongs to the precorrin methyltransferase family. As to quaternary structure, homodimer. In terms of processing, pgiMA1 automethylates at Asp-421, Asp-434, Asp-447, Asp-460, Asp-473, Asp-486, Asp-499, Asp-512, Asp-525 and Asp-538 before being processed, probably by the M64 family peptidase found in the genes surrounding PgiMA1, to release methylated peptides which then undergos macrocyclization with the N-terminus of the modified core peptides. Peptide backbone alpha-N-methylations change the physicochemical properties of amide bonds to provide structural constraints and other favorable characteristics including biological membrane permeability to peptides.

Its pathway is secondary metabolite biosynthesis. Its function is as follows. Fusion protein of the methyltransferase pgiM1 and 12 type II borosin core peptides; part of the gene cluster that mediates the biosynthesis of a type II borosin, a highly methylated cyclic peptide with potent biological activities. Type II borosins derive from the C-terminus of the fusion protein, and it is the same protein that methylates its own C-terminus using S-adenosyl methionine (SAM). The C-terminus is subsequently cleaved off and macrocyclized by a prolyloligopeptidase to give the final product. This chain is Methyltransferase/ribosomally synthesized type II borosin cyclic peptide precursor pgiMA1, found in Phlebiopsis gigantea (strain 11061_1 CR5-6) (White-rot fungus).